Consider the following 284-residue polypeptide: Release factor glutamine methyltransferase (284 aa).

Residues 123-127 (GTGTG), D146, W174, and N189 contribute to the S-adenosyl-L-methionine site. A substrate-binding site is contributed by 189-192 (NPPY).

The protein belongs to the protein N5-glutamine methyltransferase family. PrmC subfamily.

It catalyses the reaction L-glutaminyl-[peptide chain release factor] + S-adenosyl-L-methionine = N(5)-methyl-L-glutaminyl-[peptide chain release factor] + S-adenosyl-L-homocysteine + H(+). Its function is as follows. Methylates the class 1 translation termination release factors RF1/PrfA and RF2/PrfB on the glutamine residue of the universally conserved GGQ motif. The polypeptide is Release factor glutamine methyltransferase (Francisella tularensis subsp. tularensis (strain SCHU S4 / Schu 4)).